The sequence spans 112 residues: Large ribosomal subunit protein uL22 (112 aa).

Belongs to the universal ribosomal protein uL22 family. In terms of assembly, part of the 50S ribosomal subunit.

Its function is as follows. This protein binds specifically to 23S rRNA; its binding is stimulated by other ribosomal proteins, e.g. L4, L17, and L20. It is important during the early stages of 50S assembly. It makes multiple contacts with different domains of the 23S rRNA in the assembled 50S subunit and ribosome. Functionally, the globular domain of the protein is located near the polypeptide exit tunnel on the outside of the subunit, while an extended beta-hairpin is found that lines the wall of the exit tunnel in the center of the 70S ribosome. The sequence is that of Large ribosomal subunit protein uL22 from Akkermansia muciniphila (strain ATCC BAA-835 / DSM 22959 / JCM 33894 / BCRC 81048 / CCUG 64013 / CIP 107961 / Muc).